A 451-amino-acid chain; its full sequence is Gamma-aminobutyric acid receptor subunit alpha-2 (451 aa).

A signal peptide spans 1-28 (MKTKLNIYNMQFLLFVFLVWDPARLVLA). Topologically, residues 29 to 249 (NIQEDEAKNN…MTAHFHLKRK (221 aa)) are extracellular. N38 carries an N-linked (GlcNAc...) asparagine glycan. R94 lines the 4-aminobutanoate pocket. Residue N138 is glycosylated (N-linked (GlcNAc...) asparagine). T157 provides a ligand contact to 4-aminobutanoate. C166 and C180 form a disulfide bridge. Residues 250-270 (IGYFVIQTYLPCIMTVILSQV) traverse the membrane as a helical segment. Topologically, residues 271–280 (SFWLNRESVP) are cytoplasmic. A helical membrane pass occupies residues 281 to 300 (ARTVFGVTTVLTMTTLSISA). The Extracellular portion of the chain corresponds to 301–311 (RNSLPKVAYAT). Residues 312–332 (AMDWFIAVCYAFVFSALIEFA) traverse the membrane as a helical segment. Topologically, residues 333–420 (TVNYFTKRGW…FNSVSKIDRM (88 aa)) are cytoplasmic. Residues 421-441 (SRIVFPVLFGTFNLVYWATYL) form a helical membrane-spanning segment. The Extracellular portion of the chain corresponds to 442–451 (NREPVLGVSP).

The protein belongs to the ligand-gated ion channel (TC 1.A.9) family. Gamma-aminobutyric acid receptor (TC 1.A.9.5) subfamily. GABRA2 sub-subfamily. Heteropentamer, formed by a combination of alpha (GABRA1-6), beta (GABRB1-3), gamma (GABRG1-3), delta (GABRD), epsilon (GABRE), rho (GABRR1-3), pi (GABRP) and theta (GABRQ) subunits, each subunit exhibiting distinct physiological and pharmacological properties. Interacts with UBQLN1. Interacts with KIF21B. Interacts with LHFPL4. Interacts with SHISA7; interaction leads to the regulation of GABA(A) receptor trafficking, channel deactivation kinetics and pharmacology. In terms of processing, glycosylated.

It is found in the postsynaptic cell membrane. The protein resides in the cell membrane. It localises to the cytoplasmic vesicle membrane. Its subcellular location is the cell projection. The protein localises to the dendrite. The catalysed reaction is chloride(in) = chloride(out). Its activity is regulated as follows. Activated by pentobarbital. Inhibited by the antagonist bicuculline. Its function is as follows. Alpha subunit of the heteropentameric ligand-gated chloride channel gated by gamma-aminobutyric acid (GABA), a major inhibitory neurotransmitter in the brain. GABA-gated chloride channels, also named GABA(A) receptors (GABAAR), consist of five subunits arranged around a central pore and contain GABA active binding site(s) located at the alpha and beta subunit interfaces. When activated by GABA, GABAARs selectively allow the flow of chloride anions across the cell membrane down their electrochemical gradient. Chloride influx into the postsynaptic neuron following GABAAR opening decreases the neuron ability to generate a new action potential, thereby reducing nerve transmission. The alpha-2 subunit exhibits synaptogenic activity together with beta-2 and very little to no activity together with beta-3, the gamma-2 subunit being necessary but not sufficient to induce rapid synaptic contacts formation. This Homo sapiens (Human) protein is Gamma-aminobutyric acid receptor subunit alpha-2.